A 576-amino-acid polypeptide reads, in one-letter code: Protein alan shepard (576 aa).

Residues Met1–Gln12 are compositionally biased toward pro residues. Positions Met1–Pro66 are disordered. At Tyr5 the chain carries Phosphotyrosine. The segment covering Gln13 to Gln24 has biased composition (low complexity). The segment covering Gln25–Met35 has biased composition (gly residues). Over residues Gly37–Tyr54 the composition is skewed to polar residues. The span at Ser55–Pro66 shows a compositional bias: low complexity. 2 positions are modified to phosphotyrosine: Tyr125 and Tyr142. Positions Pro164–Gly225 are disordered. The segment covering Ser178–Gly225 has biased composition (low complexity). 2 RRM domains span residues Thr231–Gln302 and Thr308–Gly387. The disordered stretch occupies residues Tyr538–Lys576.

Functionally, has a role in the perception of gravity. The protein is Protein alan shepard of Drosophila simulans (Fruit fly).